Consider the following 384-residue polypeptide: Sodium channel protein Nach (384 aa).

The Extracellular segment spans residues alanine 1 to serine 319. Residues asparagine 32 and asparagine 215 are each glycosylated (N-linked (GlcNAc...) asparagine). The helical transmembrane segment at leucine 320–leucine 340 threads the bilayer. Residues arginine 341 to asparagine 384 lie on the Cytoplasmic side of the membrane.

The protein belongs to the amiloride-sensitive sodium channel (TC 1.A.6) family.

Its subcellular location is the membrane. Its function is as follows. Part of a complex that plays a role in tracheal liquid clearance. Probable role in sodium transport. This chain is Sodium channel protein Nach (Nach), found in Drosophila virilis (Fruit fly).